A 162-amino-acid polypeptide reads, in one-letter code: Interleukin-15 (162 aa).

A signal peptide spans 1–29 (MRISKPSLRSTSIQCYLCFLLNSHLITEA). Positions 30-48 (GIHVFVWGCISAGLPKTEA) are excised as a propeptide. Intrachain disulfides connect Cys-83–Cys-133 and Cys-90–Cys-136. Asn-119 and Asn-127 each carry an N-linked (GlcNAc...) asparagine glycan.

This sequence belongs to the IL-15/IL-21 family.

The protein resides in the secreted. Cytokine that plays a major role in the development of inflammatory and protective immune responses to microbial invaders and parasites by modulating immune cells of both the innate and adaptive immune systems. Stimulates the proliferation of natural killer cells, T-cells and B-cells and promotes the secretion of several cytokines. In monocytes, induces the production of IL8 and monocyte chemotactic protein 1/CCL2, two chemokines that attract neutrophils and monocytes respectively to sites of infection. Unlike most cytokines, which are secreted in soluble form, IL15 is expressed in association with its high affinity IL15RA on the surface of IL15-producing cells and delivers signals to target cells that express IL2RB and IL2RG receptor subunits. Binding to its receptor triggers the phosphorylation of JAK1 and JAK3 and the recruitment and subsequent phosphorylation of signal transducer and activator of transcription-3/STAT3 and STAT5. In mast cells, induces the rapid tyrosine phosphorylation of STAT6 and thereby controls mast cell survival and release of cytokines such as IL4. The polypeptide is Interleukin-15 (IL15) (Cavia porcellus (Guinea pig)).